The chain runs to 248 residues: tRNA pseudouridine synthase A (248 aa).

The active-site Nucleophile is the Asp53. Tyr116 provides a ligand contact to substrate.

This sequence belongs to the tRNA pseudouridine synthase TruA family. Homodimer.

It catalyses the reaction uridine(38/39/40) in tRNA = pseudouridine(38/39/40) in tRNA. Formation of pseudouridine at positions 38, 39 and 40 in the anticodon stem and loop of transfer RNAs. This is tRNA pseudouridine synthase A from Helicobacter hepaticus (strain ATCC 51449 / 3B1).